The primary structure comprises 906 residues: Protein translocase subunit SecA (906 aa).

Residues Gln89, 107–111 (GEGKT), and Asp502 contribute to the ATP site. The interval 868–887 (VPPAQRDPADPRTWGKVSRN) is disordered. 4 residues coordinate Zn(2+): Cys890, Cys892, Cys901, and His902.

It belongs to the SecA family. Monomer and homodimer. Part of the essential Sec protein translocation apparatus which comprises SecA, SecYEG and auxiliary proteins SecDF-YajC and YidC. The cofactor is Zn(2+).

The protein localises to the cell inner membrane. It is found in the cytoplasm. It catalyses the reaction ATP + H2O + cellular proteinSide 1 = ADP + phosphate + cellular proteinSide 2.. Functionally, part of the Sec protein translocase complex. Interacts with the SecYEG preprotein conducting channel. Has a central role in coupling the hydrolysis of ATP to the transfer of proteins into and across the cell membrane, serving both as a receptor for the preprotein-SecB complex and as an ATP-driven molecular motor driving the stepwise translocation of polypeptide chains across the membrane. This chain is Protein translocase subunit SecA, found in Brucella melitensis biotype 1 (strain ATCC 23456 / CCUG 17765 / NCTC 10094 / 16M).